The following is a 422-amino-acid chain: 26S proteasome non-ATPase regulatory subunit 11B (422 aa).

Residues 228–392 (AYSYFFEAFE…DVLIIFEEPP (165 aa)) enclose the PCI domain.

The protein belongs to the proteasome subunit S9 family. As to quaternary structure, component of the lid subcomplex of the 19S proteasome regulatory particle complex (also named PA700 complex). The 26S proteasome consists of a 20S proteasome core and two 19S regulatory subunits.

The protein localises to the nucleus. Its subcellular location is the cytoplasm. The protein resides in the cytosol. Its function is as follows. Component of the lid subcomplex of the 26S proteasome, a multiprotein complex involved in the ATP-dependent degradation of ubiquitinated proteins. In the complex, psmd11b is required for proteasome assembly. This Danio rerio (Zebrafish) protein is 26S proteasome non-ATPase regulatory subunit 11B (psmd11b).